A 370-amino-acid polypeptide reads, in one-letter code: Cysteine synthase 1 (370 aa).

Residues Met-1–Ser-16 constitute a mitochondrion transit peptide. Lys-73 is modified (N6-(pyridoxal phosphate)lysine). Residues Asn-103, Gly-209 to Thr-213, and Ser-308 contribute to the pyridoxal 5'-phosphate site.

The protein belongs to the cysteine synthase/cystathionine beta-synthase family. Requires pyridoxal 5'-phosphate as cofactor.

The protein resides in the mitochondrion. The catalysed reaction is O-succinyl-L-serine + hydrogen sulfide = L-cysteine + succinate. It catalyses the reaction O-acetyl-L-serine + hydrogen sulfide = L-cysteine + acetate. It participates in amino-acid biosynthesis; L-cysteine biosynthesis; L-cysteine from L-serine: step 2/2. Catalyzes the conversion of O-succinyl-L-serine into cysteine, the last step in the cysteine biosynthesis pathway. Can also use O-acetyl-L-serine. The protein is Cysteine synthase 1 of Emericella nidulans (strain FGSC A4 / ATCC 38163 / CBS 112.46 / NRRL 194 / M139) (Aspergillus nidulans).